The following is a 595-amino-acid chain: Polyadenylate-binding protein-interacting protein 4 (595 aa).

A Sm domain is found at 48–113 (RLVYFTTCKI…SRSEFVRKPP (66 aa)). Polar residues-rich tracts occupy residues 302–313 (GGSSTSDGQKPA) and 326–346 (GDSQ…TSKQ). Disordered stretches follow at residues 302–505 (GGSS…FYYP) and 536–595 (MYHP…KGRE). The span at 364-382 (DEQRRKNNEEVSHNNRSAE) shows a compositional bias: basic and acidic residues. Residues 416 to 465 (SQVSSKTKSESSFGQSASRSSESRPGPSTSSRPGLSPSSSIGSMASSEKS) are compositionally biased toward low complexity. A PAM2-like 1; degenerate motif is present at residues 466 to 474 (TLNPNAKEF). The PAM2-like 2 signature appears at 475–485 (KLNPKAKSFKP). 2 stretches are compositionally biased toward low complexity: residues 488 to 501 (SAAA…ADAS) and 548 to 570 (QPQY…PGQQ).

In terms of tissue distribution, expressed in cauline leaves, stems, rosette leaves, immature siliques and primary inflorescences.

The protein is Polyadenylate-binding protein-interacting protein 4 (CID4) of Arabidopsis thaliana (Mouse-ear cress).